We begin with the raw amino-acid sequence, 937 residues long: Aconitate hydratase A (937 aa).

A disordered region spans residues 410-450 (MANEGGFQPGSTSDLDNYNASWPGEGESAAANAEGRPSNPV). Over residues 418–429 (PGSTSDLDNYNA) the composition is skewed to polar residues. Positions 433 to 444 (GEGESAAANAEG) are enriched in low complexity. [4Fe-4S] cluster is bound by residues Cys475, Cys541, and Cys544.

Belongs to the aconitase/IPM isomerase family. As to quaternary structure, monomer. [4Fe-4S] cluster serves as cofactor.

It carries out the reaction citrate = D-threo-isocitrate. It catalyses the reaction (2S,3R)-3-hydroxybutane-1,2,3-tricarboxylate = 2-methyl-cis-aconitate + H2O. It participates in carbohydrate metabolism; tricarboxylic acid cycle; isocitrate from oxaloacetate: step 2/2. The protein operates within organic acid metabolism; propanoate degradation. Its function is as follows. Involved in the catabolism of short chain fatty acids (SCFA) via the tricarboxylic acid (TCA)(acetyl degradation route) and probably via the 2-methylcitrate cycle I (propionate degradation route). Catalyzes the reversible isomerization of citrate to isocitrate via cis-aconitate. Could catalyze the hydration of 2-methyl-cis-aconitate to yield (2R,3S)-2-methylisocitrate. The apo form of AcnA functions as a RNA-binding regulatory protein. This Corynebacterium efficiens (strain DSM 44549 / YS-314 / AJ 12310 / JCM 11189 / NBRC 100395) protein is Aconitate hydratase A (acn).